The chain runs to 312 residues: Structure-specific endonuclease subunit SLX1 (312 aa).

The region spanning 9–92 (DFYGCYLLQS…QHGYQTRYIK (84 aa)) is the GIY-YIG domain. The SLX1-type zinc finger occupies 219–282 (CQFCNKIIKH…IPQSPKCPKC (64 aa)).

It belongs to the SLX1 family. As to quaternary structure, forms a heterodimer with SLX4. A divalent metal cation serves as cofactor.

The protein localises to the nucleus. Catalytic subunit of the SLX1-SLX4 structure-specific endonuclease that resolves DNA secondary structures generated during DNA repair and recombination. Has endonuclease activity towards branched DNA substrates, introducing single-strand cuts in duplex DNA close to junctions with ss-DNA. This chain is Structure-specific endonuclease subunit SLX1, found in Candida glabrata (strain ATCC 2001 / BCRC 20586 / JCM 3761 / NBRC 0622 / NRRL Y-65 / CBS 138) (Yeast).